A 785-amino-acid chain; its full sequence is Semaphorin-3F (785 aa).

The signal sequence occupies residues 1–18 (MLVTAFILWASLLTGAWP). The Sema domain occupies 31 to 545 (RVRLSFKELK…SAVGVTHLSL (515 aa)). N-linked (GlcNAc...) asparagine glycosylation is present at N53. C104 and C115 are disulfide-bonded. Residue N126 is glycosylated (N-linked (GlcNAc...) asparagine). 4 disulfide bridges follow: C133–C142, C300–C412, C324–C372, and C548–C566. The disordered stretch occupies residues 583–602 (RSRRQDVRHGNPIRQCRGFN). One can recognise an Ig-like C2-type domain in the interval 605–695 (ANKNAVESVQ…KHIVTRVQLH (91 aa)). C678 and C746 are oxidised to a cystine. A disordered region spans residues 753–785 (VPPRPREAPGALRPPELQDQKKPRNRRHHPPDT). The segment covering 775–785 (PRNRRHHPPDT) has biased composition (basic residues).

Belongs to the semaphorin family. In terms of tissue distribution, expressed ubiquitously in adulthood. During embryogenesis, expressed in subregions of the central nervous system and various other tissues like skin, kidney, lung and intestine.

It localises to the secreted. In Mus musculus (Mouse), this protein is Semaphorin-3F (Sema3f).